Reading from the N-terminus, the 225-residue chain is Phosphoribosyltransferase domain-containing protein 1 (225 aa).

Alanine 2 carries the post-translational modification N-acetylalanine. The Mg(2+) site is built by glutamate 141 and aspartate 142. GMP-binding positions include 141–149 (EDVVGTGRT), lysine 173, 194–195 (FV), and aspartate 201. Position 201 (aspartate 201) interacts with Mg(2+).

The protein belongs to the purine/pyrimidine phosphoribosyltransferase family. As to quaternary structure, homodimer.

Functionally, has low, barely detectable phosphoribosyltransferase activity (in vitro). Binds GMP, IMP and alpha-D-5-phosphoribosyl 1-pyrophosphate (PRPP). Is not expected to contribute to purine metabolism or GMP salvage. This chain is Phosphoribosyltransferase domain-containing protein 1 (PRTFDC1), found in Homo sapiens (Human).